The chain runs to 421 residues: Testin (421 aa).

The PET domain occupies 92-199 (MILTNPVAAK…GDVKLPCEMD (108 aa)). The tract at residues 133–164 (EKQPVAGSEGAQYRKKQLAKQLPAHDQDPSKC) is disordered. Positions 155-164 (PAHDQDPSKC) are enriched in basic and acidic residues. LIM zinc-binding domains are found at residues 234–297 (YSCY…CDSE), 299–359 (PRCA…NHAV), and 362–421 (QGCH…KMMS).

It belongs to the prickle / espinas / testin family. In terms of assembly, interacts via LIM domain 1 with ZYX. Interacts (via LIM domain 3) with ENAH and VASP. Interacts with ALKBH4, talin, actin, alpha-actinin, GRIP1 and PXN. Interacts (via LIM domain 2) with ACTL7A (via N-terminus). Heterodimer with ACTL7A; the heterodimer interacts with ENAH to form a heterotrimer.

The protein resides in the cytoplasm. It localises to the cell junction. The protein localises to the focal adhesion. Scaffold protein that may play a role in cell adhesion, cell spreading and in the reorganization of the actin cytoskeleton. Plays a role in the regulation of cell proliferation. May act as a tumor suppressor. The polypeptide is Testin (TES) (Papio anubis (Olive baboon)).